The following is a 74-amino-acid chain: Kappa-scoloptoxin(07)-Ssm2e (74 aa).

A signal peptide spans 1–19; the sequence is MLVFYALLFVSVFSNTVMG. Residues 20 to 41 constitute a propeptide that is removed on maturation; the sequence is ATIDMPIPKPILREAIEEIDVN.

It belongs to the scoloptoxin-07 family. In terms of processing, contains 3 disulfide bonds. Expressed by the venom gland.

The protein resides in the secreted. Inhibits voltage-gated potassium channels. The protein is Kappa-scoloptoxin(07)-Ssm2e of Scolopendra mutilans (Chinese red-headed centipede).